A 129-amino-acid polypeptide reads, in one-letter code: MRLCRVWLSVCLCAVVLGQCQRETAEKNDYYRVPHYWDACSRALPDQTRYKYVEQLVDLTLNYHYDASHGLDNFDVLKRINVTEVSLLISDFRRQNRRGGTNKRTTFNAAGSLAPHARSLEFSVRLFAN.

A signal peptide spans 1–18 (MRLCRVWLSVCLCAVVLG).

In terms of assembly, forms the envelope pentamer complex (PC) composed of gH, gL, UL128, UL130, and UL131A. The pentamer interacts with host NRP2. The interaction with gH is important for the formation of UL128, UL130, gH-gL complex.

Its subcellular location is the virion membrane. Functionally, plays a role in viral entry into host cells. Forms a pentameric complex at the surface of the viral envelope together with gH, gL, UL130 and UL131. This complex is required for entry in epithelial, endothelial and myeloid host cells. Mechanistically, engages host receptor(s) including neurophilin 2/NRP2 to mediate infection. Contributes to the formation of the complex between UL128, UL130 and gH-gL. The polypeptide is Protein UL131A (UL131A) (Human cytomegalovirus (strain Merlin) (HHV-5)).